The sequence spans 276 residues: Extracellular metalloprotease 1 (276 aa).

The first 18 residues, 1–18, serve as a signal peptide directing secretion; that stretch reads MRVSVPVLALAFGSLAAA. Histidine 191 contacts Zn(2+). Glutamate 192 is a catalytic residue. Residue histidine 195 participates in Zn(2+) binding. A disordered region spans residues 211 to 233; it reads GDYVSDTPPQRSPSSGCPVGRDS. Cysteine 227 and cysteine 253 are joined by a disulfide.

It belongs to the peptidase M43B family.

Its subcellular location is the secreted. Its function is as follows. Secreted metalloproteinase that allows assimilation of proteinaceous substrates. Pays a pivotal role as a pathogenicity determinant during infections and contributes to the ability of the pathogen to persist within the mammalian host. Digests an immunodominant cell surface antigen (SOWgp) and prevents host recognition of endospores during the phase of development when these fungal cells are most vulnerable to phagocytic cell defenses. The chain is Extracellular metalloprotease 1 (MEP1) from Coccidioides posadasii (strain C735) (Valley fever fungus).